Reading from the N-terminus, the 775-residue chain is Ubiquitin carboxyl-terminal hydrolase 14 (775 aa).

The segment at 1–108 adopts a UBP-type 1; degenerate zinc-finger fold; the sequence is MSCPHLTETN…EDLYDYFYVP (108 aa). Zn(2+)-binding residues include Cys25, Cys28, Cys41, Cys44, Cys49, His56, His60, His66, Cys153, His155, Cys174, Cys177, Cys186, Cys189, Cys194, His207, His211, His217, Cys236, and Cys239. The UBP-type 2 zinc finger occupies 151 to 259; the sequence is TTCDHIINLP…THMLNFGIDI (109 aa). In terms of domain architecture, USP spans 300 to 774; the sequence is TGLKNLGNSC…TGYVYLFERL (475 aa). The active-site Nucleophile is the Cys309. Ser456 carries the post-translational modification Phosphoserine. 2 UBA domains span residues 576 to 617 and 639 to 679; these read EWNQ…LFEH and SVSE…ILNH. His730 (proton acceptor) is an active-site residue.

It belongs to the peptidase C19 family.

It carries out the reaction Thiol-dependent hydrolysis of ester, thioester, amide, peptide and isopeptide bonds formed by the C-terminal Gly of ubiquitin (a 76-residue protein attached to proteins as an intracellular targeting signal).. The polypeptide is Ubiquitin carboxyl-terminal hydrolase 14 (ubp14) (Schizosaccharomyces pombe (strain 972 / ATCC 24843) (Fission yeast)).